The following is a 91-amino-acid chain: Small ribosomal subunit protein uS19 (91 aa).

This sequence belongs to the universal ribosomal protein uS19 family.

Its function is as follows. Protein S19 forms a complex with S13 that binds strongly to the 16S ribosomal RNA. This is Small ribosomal subunit protein uS19 from Synechococcus sp. (strain WH7803).